We begin with the raw amino-acid sequence, 144 residues long: Interleukin-9 (144 aa).

A signal peptide spans 1–18; the sequence is MLVTYILASVLLFSSVLG. Residue Q19 is modified to Pyrrolidone carboxylic acid. 4 N-linked (GlcNAc...) asparagine glycosylation sites follow: N50, N78, N101, and N114.

The protein belongs to the IL-7/IL-9 family. In terms of assembly, interacts with IL9R. Interacts with IL2RG.

It is found in the secreted. Functionally, multifunctional cytokine secreted mainly by T-helper 2 lymphocytes and also mast cells or NKT cells that plays important roles in the immune response against parasites. Affects intestinal epithelial permeability and adaptive immunity. In addition, induces the differentiation of specific T-cell subsets such as IL-17 producing helper T-cells (TH17) and also proliferation and differentiation of mast cells. Mechanistically, exerts its biological effects through a receptor composed of IL9R subunit and a signal transducing subunit IL2RG. Receptor stimulation results in the rapid activation of JAK1 and JAK3 kinase activities leading to STAT1, STAT3 and STAT5-mediated transcriptional programs. Induction of differentiation genes seems to be mediated by STAT1 alone, while protection of cells from apoptosis depends on STAT3 and STAT5. This chain is Interleukin-9 (Il9), found in Mus musculus (Mouse).